The chain runs to 242 residues: Small ribosomal subunit protein uS2 (242 aa).

This sequence belongs to the universal ribosomal protein uS2 family.

This is Small ribosomal subunit protein uS2 from Shewanella pealeana (strain ATCC 700345 / ANG-SQ1).